We begin with the raw amino-acid sequence, 444 residues long: Acyl-CoA 6-desaturase (444 aa).

The interval 1-21 is disordered; the sequence is MGKGGNQGEGSTERQAPMPTF. Residues 1–130 are Cytoplasmic-facing; it reads MGKGGNQGEG…EDMNLFKTNH (130 aa). Residues 18–95 enclose the Cytochrome b5 heme-binding domain; the sequence is MPTFRWEEIQ…LKPLLIGELA (78 aa). A helical transmembrane segment spans residues 131–151; sequence LFFFLLLSHIIVMESLAWFIL. Residue Ser-152 is a topological domain, lumenal. Residues 153-173 traverse the membrane as a helical segment; sequence YFGTGWIPTLVTAFVLATSQA. Residues 174–264 are Cytoplasmic-facing; the sequence is QAGWLQHDYG…KYLPYNHQHE (91 aa). The Histidine box-1 signature appears at 180–184; that stretch reads HDYGH. The Histidine box-2 motif lies at 217–221; sequence HFQHH. Residues 265 to 285 traverse the membrane as a helical segment; the sequence is YFFLIGPPLLIPMYFQYQIIM. The Lumenal segment spans residues 286 to 305; that stretch reads TMISRRDWVDLAWAISYYMR. A helical membrane pass occupies residues 306-326; the sequence is FFYTYIPFYGILGALVFLNFI. The Cytoplasmic segment spans residues 327-444; that stretch reads RFLESHWFVW…ELWLDAYLHK (118 aa). The short motif at 382–386 is the Histidine box-3 element; sequence QIEHH.

Belongs to the fatty acid desaturase type 1 family. As to expression, highly expressed in the adrenal gland, liver, brain, and testis, tissues where lipogenesis and steroidogenesis are active. Also detected in lung, heart, and skeletal muscle.

Its subcellular location is the endoplasmic reticulum membrane. The enzyme catalyses (9Z,12Z)-octadecadienoyl-CoA + 2 Fe(II)-[cytochrome b5] + O2 + 2 H(+) = (6Z,9Z,12Z)-octadecatrienoyl-CoA + 2 Fe(III)-[cytochrome b5] + 2 H2O. It carries out the reaction (9Z,12Z,15Z)-octadecatrienoyl-CoA + 2 Fe(II)-[cytochrome b5] + O2 + 2 H(+) = (6Z,9Z,12Z,15Z)-octadecatetraenoyl-CoA + 2 Fe(III)-[cytochrome b5] + 2 H2O. The catalysed reaction is (9Z,12Z,15Z,18Z,21Z)-tetracosapentaenoyl-CoA + 2 Fe(II)-[cytochrome b5] + O2 + 2 H(+) = (6Z,9Z,12Z,15Z,18Z,21Z)-tetracosahexaenoyl-CoA + 2 Fe(III)-[cytochrome b5] + 2 H2O. It catalyses the reaction (11E)-octadecenoyl-CoA + 2 Fe(II)-[cytochrome b5] + O2 + 2 H(+) = (6Z,11E)-octadecadienoyl-CoA + 2 Fe(III)-[cytochrome b5] + 2 H2O. The enzyme catalyses (11Z,14Z)-eicosadienoyl-CoA + 2 Fe(II)-[cytochrome b5] + O2 + 2 H(+) = (8Z,11Z,14Z)-eicosatrienoyl-CoA + 2 Fe(III)-[cytochrome b5] + 2 H2O. It carries out the reaction (11Z,14Z,17Z)-eicosatrienoyl-CoA + 2 Fe(II)-[cytochrome b5] + O2 + 2 H(+) = (8Z,11Z,14Z,17Z)-eicosatetraenoyl-CoA + 2 Fe(III)-[cytochrome b5] + 2 H2O. Its pathway is lipid metabolism; polyunsaturated fatty acid biosynthesis. Functionally, involved in the biosynthesis of highly unsaturated fatty acids (HUFA) from the essential polyunsaturated fatty acids (PUFA) linoleic acid (LA) (18:2n-6) and alpha-linolenic acid (ALA) (18:3n-3) precursors, acting as a fatty acyl-coenzyme A (CoA) desaturase that introduces a cis double bond at carbon 6 of the fatty acyl chain. Catalyzes the first and rate limiting step in this pathway which is the desaturation of LA (18:2n-6) and ALA (18:3n-3) into gamma-linoleate (GLA) (18:3n-6) and stearidonate (18:4n-3), respectively. Subsequently, in the biosynthetic pathway of HUFA n-3 series, it desaturates tetracosapentaenoate (24:5n-3) to tetracosahexaenoate (24:6n-3), which is then converted to docosahexaenoate (DHA)(22:6n-3), an important lipid for nervous system function. It can also desaturate (11E)-octadecenoate (trans-vaccenoate) at carbon 6 generating (6Z,11E)-octadecadienoate. In addition to Delta-6 activity, this enzyme exhibits Delta-8 activity with slight biases toward n-3 fatty acyl-CoA substrates. In Mus musculus (Mouse), this protein is Acyl-CoA 6-desaturase.